We begin with the raw amino-acid sequence, 109 residues long: ATP-dependent Clp protease adapter protein ClpS (109 aa).

The tract at residues 1–20 is disordered; sequence MAERKQGGQGNGVGSSVVTE.

It belongs to the ClpS family. In terms of assembly, binds to the N-terminal domain of the chaperone ClpA.

Its function is as follows. Involved in the modulation of the specificity of the ClpAP-mediated ATP-dependent protein degradation. This is ATP-dependent Clp protease adapter protein ClpS from Caulobacter vibrioides (strain NA1000 / CB15N) (Caulobacter crescentus).